We begin with the raw amino-acid sequence, 124 residues long: Ribosome-binding factor A (124 aa).

This sequence belongs to the RbfA family. Monomer. Binds 30S ribosomal subunits, but not 50S ribosomal subunits or 70S ribosomes.

Its subcellular location is the cytoplasm. Its function is as follows. One of several proteins that assist in the late maturation steps of the functional core of the 30S ribosomal subunit. Associates with free 30S ribosomal subunits (but not with 30S subunits that are part of 70S ribosomes or polysomes). Required for efficient processing of 16S rRNA. May interact with the 5'-terminal helix region of 16S rRNA. In Buchnera aphidicola subsp. Schizaphis graminum (strain Sg), this protein is Ribosome-binding factor A.